Reading from the N-terminus, the 203-residue chain is RNA annealing protein YRA2 (203 aa).

At M1 the chain carries N-acetylmethionine. 2 disordered regions span residues M1–P60 and E134–G203. The span at N11–H20 shows a compositional bias: polar residues. Basic and acidic residues predominate over residues S47–P60. The region spanning K64–P138 is the RRM domain. 2 stretches are compositionally biased toward basic residues: residues Q139–Q153 and P163–G180.

Belongs to the YRA1 family. As to quaternary structure, associates with mRNPs. Interacts with YRA1.

It localises to the nucleus. Functionally, involved in export of poly(A) mRNAs from the nucleus. Recruited to the coding sequences as well as poly-A sites of active genes. This is RNA annealing protein YRA2 (YRA2) from Saccharomyces cerevisiae (strain RM11-1a) (Baker's yeast).